A 211-amino-acid polypeptide reads, in one-letter code: MIIGLTGSIGMGKSTLARMARRLGVAVHDADATVHALLGRRGAAVAAVLAAFPGVGTLTEGIDRKALGARVFGRPPALARLEAILHPLVRRREAAFLRCCGLGRRKVVILDVPLLFETGGEHRCDRVMVVSAPAFLQSQRVLRRPGMTAALLADIRARQTPEVVKRLNAEAVVPTGLGPRPALRALRANLTMARSGVRRWRRGKRTYRPHA.

The region spanning 2–204 is the DPCK domain; it reads IIGLTGSIGM…SGVRRWRRGK (203 aa). Position 10 to 15 (10 to 15) interacts with ATP; the sequence is GMGKST.

The protein belongs to the CoaE family.

The protein localises to the cytoplasm. It carries out the reaction 3'-dephospho-CoA + ATP = ADP + CoA + H(+). The protein operates within cofactor biosynthesis; coenzyme A biosynthesis; CoA from (R)-pantothenate: step 5/5. Its function is as follows. Catalyzes the phosphorylation of the 3'-hydroxyl group of dephosphocoenzyme A to form coenzyme A. The protein is Dephospho-CoA kinase of Rhodospirillum rubrum (strain ATCC 11170 / ATH 1.1.1 / DSM 467 / LMG 4362 / NCIMB 8255 / S1).